The chain runs to 67 residues: UPF0519 protein C (67 aa).

The tract at residues 18–37 (KSQANLNSNSTNSPNNVQGL) is disordered. Positions 22 to 33 (NLNSNSTNSPNN) are enriched in low complexity.

It belongs to the UPF0519 family.

The protein is UPF0519 protein C of Dictyostelium discoideum (Social amoeba).